Reading from the N-terminus, the 248-residue chain is Acetoacetyl-CoA reductase (248 aa).

NADP(+) is bound by residues 14–16 (GGI), Arg-42, and 90–94 (NAGIT). Substrate is bound by residues Asp-96 and 149-152 (QFGQ). Tyr-155 (proton acceptor) is an active-site residue. Position 185–188 (185–188 (PGYT)) interacts with NADP(+). Substrate-binding positions include 186-187 (GY) and Arg-197.

It belongs to the short-chain dehydrogenases/reductases (SDR) family.

It localises to the cytoplasm. It catalyses the reaction a (3R)-3-hydroxyacyl-CoA + NADP(+) = a 3-oxoacyl-CoA + NADPH + H(+). Its pathway is biopolymer metabolism; poly-(R)-3-hydroxybutanoate biosynthesis. The sequence is that of Acetoacetyl-CoA reductase (phaB) from Acinetobacter sp. (strain RA3849).